The sequence spans 179 residues: Large ribosomal subunit protein uL6 (179 aa).

The protein belongs to the universal ribosomal protein uL6 family. Part of the 50S ribosomal subunit.

In terms of biological role, this protein binds to the 23S rRNA, and is important in its secondary structure. It is located near the subunit interface in the base of the L7/L12 stalk, and near the tRNA binding site of the peptidyltransferase center. This chain is Large ribosomal subunit protein uL6, found in Clostridium acetobutylicum (strain ATCC 824 / DSM 792 / JCM 1419 / IAM 19013 / LMG 5710 / NBRC 13948 / NRRL B-527 / VKM B-1787 / 2291 / W).